The primary structure comprises 220 residues: B-cell antigen receptor complex-associated protein alpha chain (220 aa).

Positions 1 to 28 are cleaved as a signal peptide; that stretch reads MPGGLEALRALPLLLFLSYACLGPGCQA. One can recognise an Ig-like C2-type domain in the interval 29–117; sequence LRVEGGPPSL…ILKRSCGTYL (89 aa). The Extracellular portion of the chain corresponds to 29–137; that stretch reads LRVEGGPPSL…LDMGEGTKNR (109 aa). C50 and C101 are disulfide-bonded. N-linked (GlcNAc...) asparagine glycans are attached at residues N58 and N68. A helical transmembrane segment spans residues 138–159; sequence IITAEGIILLFCAVVPGTLLLF. At 160–220 the chain is on the cytoplasmic side; the sequence is RKRWQNEKFG…HIGDAQLEKP (61 aa). One can recognise an ITAM domain in the interval 171–199; that stretch reads DMPDDYEDENLYEGLNLDDCSMYEDISRG. Y182 and Y193 each carry phosphotyrosine; by SRC-type Tyr-kinases. At R198 the chain carries Asymmetric dimethylarginine; by PRMT1. Residue Y204 is modified to Phosphotyrosine; by Tyr-kinases.

As to quaternary structure, heterodimer of alpha and beta chains; disulfide-linked. Part of the B-cell antigen receptor complex where the alpha/beta chain heterodimer is non-covalently associated with an antigen-specific membrane-bound surface immunoglobulin of two heavy chains and two light chains. Interacts through its phosphorylated ITAM domain with the SH2 domains of SYK which stimulates SYK autophosphorylation and activation. Also interacts, when phosphorylated on Tyr-204, with the SH2 domain of BLNK/SLP65, bringing BLNK into proximity with SYK and allowing SYK to phosphorylate BLNK which is necessary for trafficking of the BCR to late endosomes. Interacts with Src-family tyrosine kinases including FYN and LYN, increasing their activity. Phosphorylated on tyrosine, serine and threonine residues upon B-cell activation. Phosphorylation of tyrosine residues by Src-family kinases, including LYN, is an early and essential feature of the BCR signaling cascade. The phosphorylated tyrosines serve as docking sites for SH2-domain containing kinases, leading to their activation which in turn leads to phosphorylation of downstream targets. Phosphorylation of serine and threonine residues may prevent subsequent tyrosine phosphorylation. In terms of processing, arginine methylation in the ITAM domain may interfere with the binding of SYK. It promotes signals leading to B-cell differentiation. As to expression, B-cells.

The protein localises to the cell membrane. Functionally, required in cooperation with CD79B for initiation of the signal transduction cascade activated by binding of antigen to the B-cell antigen receptor complex (BCR) which leads to internalization of the complex, trafficking to late endosomes and antigen presentation. Also required for BCR surface expression and for efficient differentiation of pro- and pre-B-cells. Stimulates SYK autophosphorylation and activation. Binds to BLNK, bringing BLNK into proximity with SYK and allowing SYK to phosphorylate BLNK. Also interacts with and increases activity of some Src-family tyrosine kinases. Represses BCR signaling during development of immature B-cells. The chain is B-cell antigen receptor complex-associated protein alpha chain (Cd79a) from Mus musculus (Mouse).